The sequence spans 476 residues: 2-(3-amino-3-carboxypropyl)histidine synthase subunit 2 (476 aa).

The segment covering 1–15 has biased composition (polar residues); sequence MTESAPSAFFTTSTP. The disordered stretch occupies residues 1–24; the sequence is MTESAPSAFFTTSTPADHVHEEES. Positions 102, 123, and 347 each coordinate [4Fe-4S] cluster. Residues 451 to 476 are disordered; the sequence is DGVSTAEDSTKMGEGRSGIAQGYSGK.

This sequence belongs to the DPH1/DPH2 family. DPH2 subfamily. As to quaternary structure, component of the 2-(3-amino-3-carboxypropyl)histidine synthase complex composed of dph-1, dph-2, dph-3 and a NADH-dependent reductase. [4Fe-4S] cluster serves as cofactor.

It participates in protein modification; peptidyl-diphthamide biosynthesis. Required for the first step of diphthamide biosynthesis, a post-translational modification of histidine which occurs in elongation factor 2. Dph-1 and dph-2 transfer a 3-amino-3-carboxypropyl (ACP) group from S-adenosyl-L-methionine (SAM) to a histidine residue, the reaction is assisted by a reduction system comprising dph-3 and a NADH-dependent reductase. Facilitates the reduction of the catalytic iron-sulfur cluster found in the dph-1 subunit. The polypeptide is 2-(3-amino-3-carboxypropyl)histidine synthase subunit 2 (dph-2) (Caenorhabditis elegans).